Consider the following 739-residue polypeptide: NAD(P)H-quinone oxidoreductase subunit 5, chloroplastic (739 aa).

A run of 16 helical transmembrane segments spans residues 9–29, 40–60, 89–109, 125–145, 147–167, 185–205, 219–239, 258–278, 286–306, 327–347, 354–374, 396–416, 425–445, 543–563, 602–622, and 717–737; these read WIIPFIPLPVPMLIGAGLILF, WAFQSVLLLSIVMIFSIYLSI, IDPLTSIMSILITTVGIMVLI, FAYMSFFSTSMLGLVTSSNLI, IYIFWELVGLCSYLLIGFWFT, GDFGLLLGILGFYWITGSFEF, NEVNFLFVTLCAVLLFAGAVA, TPISALIHAATMVAAGIFLVA, VIPYIMYLISVIGIITVLLGA, LGYMMLALGMGSYRSALFHLI, ALLFLGSGSIIHSMETIVGYS, ITFLLGTLSLCGIPPLACFWS, WLYSPIFAIIAWATAGLTAFY, LFPIFVLGLFTLFVGAIGIPF, VVSVSIAYFGIFIASFLYKPI, and SYLFLYLAYVSVFLLVYYLLF.

The protein belongs to the complex I subunit 5 family. In terms of assembly, NDH is composed of at least 16 different subunits, 5 of which are encoded in the nucleus.

The protein resides in the plastid. It localises to the chloroplast thylakoid membrane. It carries out the reaction a plastoquinone + NADH + (n+1) H(+)(in) = a plastoquinol + NAD(+) + n H(+)(out). The catalysed reaction is a plastoquinone + NADPH + (n+1) H(+)(in) = a plastoquinol + NADP(+) + n H(+)(out). Functionally, NDH shuttles electrons from NAD(P)H:plastoquinone, via FMN and iron-sulfur (Fe-S) centers, to quinones in the photosynthetic chain and possibly in a chloroplast respiratory chain. The immediate electron acceptor for the enzyme in this species is believed to be plastoquinone. Couples the redox reaction to proton translocation, and thus conserves the redox energy in a proton gradient. This is NAD(P)H-quinone oxidoreductase subunit 5, chloroplastic (ndhF) from Solanum tuberosum (Potato).